We begin with the raw amino-acid sequence, 107 residues long: UPF0145 protein PC1_1703 (107 aa).

It belongs to the UPF0145 family.

This chain is UPF0145 protein PC1_1703, found in Pectobacterium carotovorum subsp. carotovorum (strain PC1).